Reading from the N-terminus, the 148-residue chain is Coactosin (148 aa).

Positions 1–134 constitute an ADF-H domain; the sequence is MSGFDLSEVA…VEDEIAAKIK (134 aa). The short motif at 71–76 is the F-loop; important for stable binding to G-actin and F-actin element; that stretch reads DEESKR. Ser147 bears the Phosphoserine mark.

This sequence belongs to the actin-binding proteins ADF family. Coactosin subfamily. As to quaternary structure, interacts with 14-3-3 protein 3. Post-translationally, phosphorylation at Ser-147 appears not to affect its binding to actin; however, it may regulate phagocytosis and motility.

The protein resides in the cytoplasm. Its subcellular location is the cell projection. It is found in the phagocytic cup. It localises to the pseudopodium. The protein localises to the cell membrane. The protein resides in the cytoskeleton. Functionally, actin-binding protein which is involved in F-actin stabilization. May play a role during phagocytosis and pseudopod formation by contributing to the maintenance of F-actin. This Entamoeba histolytica (strain ATCC 30459 / HM-1:IMSS / ABRM) protein is Coactosin.